Reading from the N-terminus, the 253-residue chain is Triosephosphate isomerase (253 aa).

Residue 9–11 coordinates substrate; the sequence is NWK. The Electrophile role is filled by histidine 96. Glutamate 168 acts as the Proton acceptor in catalysis. Residues glycine 174, serine 213, and 234-235 contribute to the substrate site; that span reads GG.

The protein belongs to the triosephosphate isomerase family. Homodimer.

The protein resides in the cytoplasm. The enzyme catalyses D-glyceraldehyde 3-phosphate = dihydroxyacetone phosphate. Its pathway is carbohydrate biosynthesis; gluconeogenesis. The protein operates within carbohydrate degradation; glycolysis; D-glyceraldehyde 3-phosphate from glycerone phosphate: step 1/1. Involved in the gluconeogenesis. Catalyzes stereospecifically the conversion of dihydroxyacetone phosphate (DHAP) to D-glyceraldehyde-3-phosphate (G3P). The polypeptide is Triosephosphate isomerase (Hydrogenovibrio crunogenus (strain DSM 25203 / XCL-2) (Thiomicrospira crunogena)).